We begin with the raw amino-acid sequence, 336 residues long: Di/tripeptide transport system permease protein DppB (336 aa).

The next 6 helical transmembrane spans lie at 10 to 30 (GLLI…IRLI), 102 to 122 (LSLA…VIAA), 145 to 165 (IFWW…WTPV), 198 to 218 (AVRH…AVIA), 257 to 277 (LIPV…GAVL), and 307 to 327 (ILLV…LYGL). Residues 96 to 325 (FPATLELSLA…LVNFVVDILY (230 aa)) enclose the ABC transmembrane type-1 domain.

Belongs to the binding-protein-dependent transport system permease family. OppBC subfamily. As to quaternary structure, the complex is composed of two ATP-binding proteins (DppD and DppF), two transmembrane proteins (DppB and DppC) and a solute-binding protein (DppA1-A5). Five orthologous SBPs (DppA1-A5) are present in P.aeruginosa, which increases the substrate specificity of the DppBCDF transporter.

Its subcellular location is the cell inner membrane. In terms of biological role, part of the ABC transporter DppABCDF involved in the uptake of various di/tripeptides. Is also involved in the uptake of phaseolotoxin, a toxic tripeptide inhibiting the enzyme ornithine carbamoyltransferase. Responsible for the translocation of the substrate across the membrane. The chain is Di/tripeptide transport system permease protein DppB from Pseudomonas aeruginosa (strain UCBPP-PA14).